The primary structure comprises 240 residues: Sialidase 85-1.2 (240 aa).

Positions 127–142 are enriched in acidic residues; the sequence is DDDDGGDDDDEEDSQE. Disordered stretches follow at residues 127-158 and 221-240; these read DDDD…GKKP and HRGG…QRDA. A compositionally biased stretch (basic and acidic residues) spans 144 to 155; the sequence is SSPKESSPEKIG.

This sequence belongs to the glycosyl hydrolase 33 family.

The catalysed reaction is Hydrolysis of alpha-(2-&gt;3)-, alpha-(2-&gt;6)-, alpha-(2-&gt;8)- glycosidic linkages of terminal sialic acid residues in oligosaccharides, glycoproteins, glycolipids, colominic acid and synthetic substrates.. Its function is as follows. Developmentally regulated neuraminidase implicated in parasite invasion of cells. May contribute to the pathology during T.cruzi infection by cleaving sialic acid from cells of the immune system. The protein is Sialidase 85-1.2 (SA85-1.2) of Trypanosoma cruzi.